The chain runs to 441 residues: MSSTIFYRFKSQRNTSRILFDGTGLTVFDLKREIIQENKLGDGTDFQLKIYNPDTEEEYDDDAFVIPRSTSVIVKRSPAIKSFSVHSRLKGNVGAAALGNATRYVTGRPRVLQKRQHTATTTANVSGTTEEERIASMFATQENQWEQTQEEMSAATPVFFKSQTNKNSAQENEGPPPPGYMCYRCGGRDHWIKNCPTNSDPNFEGKRIRRTTGIPKKFLKSIEIDPETMTPEEMAQRKIMITDEGKFVVQVEDKQSWEDYQRKRENRQIDGDETIWRKGHFKDLPDDLKCPLTGGLLRQPVKTSKCCNIDFSKEALENALVESDFVCPNCETRDILLDSLVPDQDKEKEVETFLKKQEELHGSSKDGNQPETKKMKLMDPTGTAGLNNNTSLPTSVNNGGTPVPPVPLPFGIPPFPMFPMPFMPPTATITNPHQADASPKK.

Positions 5–78 (IFYRFKSQRN…STSVIVKRSP (74 aa)) constitute a DWNN domain. Residues 180 to 197 (YMCYRCGGRDHWIKNCPT) form a CCHC-type zinc finger. S221 bears the Phosphoserine mark. Over residues 355–364 (KKQEELHGSS) the composition is skewed to basic and acidic residues. The disordered stretch occupies residues 355-400 (KKQEELHGSSKDGNQPETKKMKLMDPTGTAGLNNNTSLPTSVNNGG). Residues 384-400 (AGLNNNTSLPTSVNNGG) show a composition bias toward polar residues.

As to quaternary structure, component of the cleavage and polyadenylation factor (CPF) complex, which is composed of PTI1, SYC1, SSU72, GLC7, MPE1, REF2, PFS2, PTA1, YSH1/BRR5, SWD2, CFT2/YDH1, YTH1, CFT1/YHH1, FIP1 and PAP1.

The protein localises to the nucleus. In terms of biological role, component of the cleavage and polyadenylation factor (CPF) complex, which plays a key role in polyadenylation-dependent pre-mRNA 3'-end formation and cooperates with cleavage factors including the CFIA complex and NAB4/CFIB. The protein is Protein MPE1 (MPE1) of Saccharomyces cerevisiae (strain ATCC 204508 / S288c) (Baker's yeast).